The primary structure comprises 111 residues: Ribonuclease P protein component (111 aa).

The protein belongs to the RnpA family. Consists of a catalytic RNA component (M1 or rnpB) and a protein subunit.

The enzyme catalyses Endonucleolytic cleavage of RNA, removing 5'-extranucleotides from tRNA precursor.. Its function is as follows. RNaseP catalyzes the removal of the 5'-leader sequence from pre-tRNA to produce the mature 5'-terminus. It can also cleave other RNA substrates such as 4.5S RNA. The protein component plays an auxiliary but essential role in vivo by binding to the 5'-leader sequence and broadening the substrate specificity of the ribozyme. This is Ribonuclease P protein component from Borreliella afzelii (strain PKo) (Borrelia afzelii).